A 171-amino-acid polypeptide reads, in one-letter code: Transcription factor pcr1 (171 aa).

A bZIP domain is found at 10 to 73 (DEKRRRILER…FRLKSQLLAH (64 aa)). Residues 12–51 (KRRRILERNRIAASKFRQKKKEWIKELEQTANAAFEQSKR) form a basic motif region. The segment at 52–66 (LQLLLSQLQQEAFRL) is leucine-zipper. A disordered region spans residues 125-171 (QMHPSLQGLPPNQHPQMPPSSQQPNSDDVQQHMFSAAGLPRSLGGPI). The span at 143–152 (PSSQQPNSDD) shows a compositional bias: low complexity.

The protein belongs to the bZIP family. As to quaternary structure, heterodimer of pcr1/mts2 and atf1/mts1.

The protein localises to the nucleus. Involved in regulation of gene expression for sexual development. Binds and activates CRE sites (cAMP-response elements, also known as M26 meiotic recombination hotspots). The chain is Transcription factor pcr1 (pcr1) from Schizosaccharomyces pombe (strain 972 / ATCC 24843) (Fission yeast).